The following is a 352-amino-acid chain: Glycogen synthase kinase 3 (352 aa).

Residues tyrosine 20–phenylalanine 310 enclose the Protein kinase domain. ATP-binding positions include alanine 26–valine 34 and lysine 49. Aspartate 152 serves as the catalytic Proton acceptor.

It belongs to the protein kinase superfamily. CMGC Ser/Thr protein kinase family. GSK-3 subfamily. In terms of assembly, inhibited by cyclin kinase 2 (CDK2) inhibitors, including GW8510.

It carries out the reaction L-seryl-[tau protein] + ATP = O-phospho-L-seryl-[tau protein] + ADP + H(+). The enzyme catalyses L-threonyl-[tau protein] + ATP = O-phospho-L-threonyl-[tau protein] + ADP + H(+). The chain is Glycogen synthase kinase 3 from Trypanosoma brucei brucei (strain 927/4 GUTat10.1).